A 32-amino-acid chain; its full sequence is Zinc metalloproteinase/disintegrin-like CdtV1 (32 aa).

Intrachain disulfides connect Cys-5-Cys-14 and Cys-7-Cys-15.

It belongs to the venom metalloproteinase (M12B) family. P-II subfamily. P-IIa sub-subfamily. In terms of assembly, monomer. Expressed by the venom gland.

The protein resides in the secreted. Functionally, snake venom metalloproteinase that impairs hemostasis in the envenomed animal. In Crotalus durissus terrificus (South American rattlesnake), this protein is Zinc metalloproteinase/disintegrin-like CdtV1.